Reading from the N-terminus, the 38-residue chain is Non-specific lipid-transfer protein P2 (38 aa).

It belongs to the plant LTP family.

Its subcellular location is the secreted. In terms of biological role, plant non-specific lipid-transfer proteins transfer phospholipids as well as galactolipids across membranes. May play a role in wax or cutin deposition in the cell walls of expanding epidermal cells and certain secretory tissues. The protein is Non-specific lipid-transfer protein P2 of Vitis sp. (Grape).